Reading from the N-terminus, the 217-residue chain is Adr-2-binding protein 1 (217 aa).

The disordered stretch occupies residues 33 to 65 (ARPEPQHDSLKRRNTTSSIAKKKAKMTRGDEQI). Residues 44 to 58 (RRNTTSSIAKKKAKM) are compositionally biased toward basic residues.

Interacts with double-stranded RNA-specific adenosine deaminase adr-2. Expressed in main body hypodermal cells, the hypodermal seam cells, pharynx, intestine and some neurons.

Its subcellular location is the nucleus. Functionally, required for the A-I editing activity of the double-stranded RNA-specific adenosine deaminase adr-2 by facilitating adr-2 nuclear localization. This Caenorhabditis elegans protein is Adr-2-binding protein 1.